We begin with the raw amino-acid sequence, 333 residues long: Fructose-1,6-bisphosphatase class 1 (333 aa).

Mg(2+) contacts are provided by glutamate 92, aspartate 113, leucine 115, and aspartate 116. Residues 116–119 (DGSS), asparagine 209, tyrosine 242, and lysine 272 each bind substrate. A Mg(2+)-binding site is contributed by glutamate 278.

This sequence belongs to the FBPase class 1 family. In terms of assembly, homotetramer. The cofactor is Mg(2+).

Its subcellular location is the cytoplasm. The enzyme catalyses beta-D-fructose 1,6-bisphosphate + H2O = beta-D-fructose 6-phosphate + phosphate. It functions in the pathway carbohydrate biosynthesis; Calvin cycle. The protein is Fructose-1,6-bisphosphatase class 1 of Chlorobium phaeovibrioides (strain DSM 265 / 1930) (Prosthecochloris vibrioformis (strain DSM 265)).